A 231-amino-acid chain; its full sequence is NADH-ubiquinone oxidoreductase chain 4 (231 aa).

The next 6 membrane-spanning stretches (helical) occupy residues 1 to 21 (PIAG…YGII), 34 to 54 (MFLP…LTCL), 63 to 85 (IAYS…TPWG), 89 to 111 (AMAL…NTTY), 128 to 148 (ILPM…AIPP), and 169 to 189 (TIIM…HMFL).

It belongs to the complex I subunit 4 family.

It is found in the mitochondrion membrane. It catalyses the reaction a ubiquinone + NADH + 5 H(+)(in) = a ubiquinol + NAD(+) + 4 H(+)(out). In terms of biological role, core subunit of the mitochondrial membrane respiratory chain NADH dehydrogenase (Complex I) that is believed to belong to the minimal assembly required for catalysis. Complex I functions in the transfer of electrons from NADH to the respiratory chain. The immediate electron acceptor for the enzyme is believed to be ubiquinone. This chain is NADH-ubiquinone oxidoreductase chain 4 (MT-ND4), found in Deinagkistrodon acutus (Hundred-pace snake).